Here is a 254-residue protein sequence, read N- to C-terminus: Dihydroorotate dehydrogenase B (NAD(+)), electron transfer subunit (254 aa).

The region spanning 1–99 (MLQTEMKVIQ…LGPLGKGFDI (99 aa)) is the FAD-binding FR-type domain. Residues 50–53 (RPIS), 67–69 (LYR), and 74–75 (GT) contribute to the FAD site. Positions 218, 223, 226, and 241 each coordinate [2Fe-2S] cluster.

It belongs to the PyrK family. As to quaternary structure, heterotetramer of 2 PyrK and 2 PyrD type B subunits. The cofactor is [2Fe-2S] cluster. FAD is required as a cofactor.

It participates in pyrimidine metabolism; UMP biosynthesis via de novo pathway; orotate from (S)-dihydroorotate (NAD(+) route): step 1/1. In terms of biological role, responsible for channeling the electrons from the oxidation of dihydroorotate from the FMN redox center in the PyrD type B subunit to the ultimate electron acceptor NAD(+). The protein is Dihydroorotate dehydrogenase B (NAD(+)), electron transfer subunit of Listeria monocytogenes serovar 1/2a (strain ATCC BAA-679 / EGD-e).